Here is a 255-residue protein sequence, read N- to C-terminus: RNA polymerase sigma-F factor (255 aa).

The Polymerase core binding signature appears at 61 to 74 (DLFQIGCIGLLKSV). The H-T-H motif DNA-binding region spans 221–240 (QSEVAERLGISQVQVSRLEK).

The protein belongs to the sigma-70 factor family. As to quaternary structure, interacts transiently with the RNAP core.

Interaction with SpoIIAB inhibits sigma-F activity throughout the cell before the formation of the asymmetric septum; after septation the interaction is confined to the mother cell, and sigma-F activity is released in the prespore. Fin, a second, forespore-specific anti-sigma factor is induced in 2 successive waves by sigma-F and sigma-G, by antagonizing sigma-F it allows the switch to sigma-G factor and progression to the late sporulation development stages. Functionally, sigma factors are initiation factors that promote the attachment of RNA polymerase to specific initiation sites and are then released. This sigma factor is responsible for the expression of sporulation specific genes. Interaction with SpoIIAB inhibits sigma-F activity throughout the cell before the formation of the asymmetric septum; after septation the interaction is confined to the mother cell, and sigma F activity is released in the prespore. Responsible for expression of csfB (the anti-sigma-G factor Gin). Associates with the RNAP core only in stationary phase cells. This chain is RNA polymerase sigma-F factor (sigF), found in Bacillus subtilis (strain 168).